A 209-amino-acid chain; its full sequence is High frequency lysogenization protein HflD homolog (209 aa).

It belongs to the HflD family.

The protein localises to the cytoplasm. The protein resides in the cell inner membrane. The protein is High frequency lysogenization protein HflD homolog of Halorhodospira halophila (strain DSM 244 / SL1) (Ectothiorhodospira halophila (strain DSM 244 / SL1)).